The following is a 347-amino-acid chain: 3-isopropylmalate dehydrogenase (347 aa).

Positions 95, 105, 129, and 220 each coordinate substrate. Mg(2+) contacts are provided by D220, D244, and D248. Residue 280–292 (GSAPDIAGQGKAD) coordinates NAD(+).

Belongs to the isocitrate and isopropylmalate dehydrogenases family. LeuB type 2 subfamily. Homodimer. Requires Mg(2+) as cofactor. Mn(2+) serves as cofactor.

It localises to the cytoplasm. It catalyses the reaction (2R,3S)-3-isopropylmalate + NAD(+) = 4-methyl-2-oxopentanoate + CO2 + NADH. It participates in amino-acid biosynthesis; L-leucine biosynthesis; L-leucine from 3-methyl-2-oxobutanoate: step 3/4. In terms of biological role, catalyzes the oxidation of 3-carboxy-2-hydroxy-4-methylpentanoate (3-isopropylmalate) to 3-carboxy-4-methyl-2-oxopentanoate. The product decarboxylates to 4-methyl-2 oxopentanoate. The protein is 3-isopropylmalate dehydrogenase of Beutenbergia cavernae (strain ATCC BAA-8 / DSM 12333 / CCUG 43141 / JCM 11478 / NBRC 16432 / NCIMB 13614 / HKI 0122).